Reading from the N-terminus, the 938-residue chain is Protocadherin gamma-C4 (938 aa).

The N-terminal stretch at 1–29 (MLRKVRSWTEIWRWATLLFLFYHLGYVCG) is a signal peptide. 6 Cadherin domains span residues 30-133 (QIRY…APRF), 134-242 (PRQQ…APAF), 243-350 (QQSS…APYI), 351-455 (TVTS…PPSF), 456-565 (FQRS…APAV), and 572-676 (PGSL…VPDL). At 30-692 (QIRYPVPEES…REGESRLTLY (663 aa)) the chain is on the extracellular side. Asn265, Asn276, and Asn444 each carry an N-linked (GlcNAc...) asparagine glycan. Residues 693–713 (LAVSLVAICFVSFGSFVALLS) form a helical membrane-spanning segment. Residues 714–938 (KCLRGAACGV…KKKSGKKEKK (225 aa)) lie on the Cytoplasmic side of the membrane. Disordered stretches follow at residues 791 to 847 (PSAP…WPNN) and 908 to 938 (ATLT…KEKK). Polar residues predominate over residues 822 to 847 (WRFSQAQRPGTSGSQNGDDTGTWPNN). A compositionally biased stretch (basic residues) spans 928–938 (NKKKSGKKEKK).

Its subcellular location is the cell membrane. Its function is as follows. Potential calcium-dependent cell-adhesion protein. May be involved in the establishment and maintenance of specific neuronal connections in the brain. This chain is Protocadherin gamma-C4 (PCDHGC4), found in Homo sapiens (Human).